The following is a 239-amino-acid chain: Protein LIFEGUARD 2 (239 aa).

Transmembrane regions (helical) follow at residues 41 to 61 (LLVTIAVAATVVKVHSISVFF), 66 to 86 (AGFALYILLILTPLIVMCPLY), 96 to 116 (YLLLGIFTVALAFAVGLTCAF), 121 to 141 (VILESVILTAVVVISLTLYTF), 156 to 176 (FLFGAVIVLMVFSFIQILFPL), 179 to 199 (ISVMIYGCLASIIFCGYIVYD), and 213 to 233 (IWAAVSLYLDVINLFLSLLTL).

The protein belongs to the BI1 family. Expressed in seedlings, roots, leaves, inflorescences and flowers.

It is found in the membrane. Regulates the brassinosteroid (BR) signaling pathway that mediates cell elongation and organ morphogenesis. In terms of biological role, (Microbial infection) Facilitates the development of the powdery mildew fungus E.cruciferarum. Its function is as follows. (Microbial infection) May prevent cell death upon A.alternata f.sp. lycopersici (AAL) toxin treatment. The sequence is that of Protein LIFEGUARD 2 from Arabidopsis thaliana (Mouse-ear cress).